A 292-amino-acid polypeptide reads, in one-letter code: AKT-interacting protein (292 aa).

Residues 1 to 64 (MNPFWNMSSA…ISPSPSVQPT (64 aa)) are disordered. Residues 14–23 (KRSDNDEKIA) are compositionally biased toward basic and acidic residues. A UBC core domain is found at 75–223 (YLEYSLLAEF…VVDSVKLCNS (149 aa)). The segment at 273-292 (SWVKPGSVLPFSKEENSLQT) is disordered.

The protein belongs to the ubiquitin-conjugating enzyme family. FTS subfamily.

The protein resides in the cytoplasm. It localises to the cell membrane. Its function is as follows. May function to promote vesicle trafficking and/or fusion. May also regulate apoptosis. In Xenopus tropicalis (Western clawed frog), this protein is AKT-interacting protein (aktip).